The chain runs to 249 residues: Ubiquinone/menaquinone biosynthesis C-methyltransferase UbiE (249 aa).

S-adenosyl-L-methionine-binding positions include Thr-72, Asp-93, and 121–122 (DA).

Belongs to the class I-like SAM-binding methyltransferase superfamily. MenG/UbiE family.

It carries out the reaction a 2-demethylmenaquinol + S-adenosyl-L-methionine = a menaquinol + S-adenosyl-L-homocysteine + H(+). It catalyses the reaction a 2-methoxy-6-(all-trans-polyprenyl)benzene-1,4-diol + S-adenosyl-L-methionine = a 5-methoxy-2-methyl-3-(all-trans-polyprenyl)benzene-1,4-diol + S-adenosyl-L-homocysteine + H(+). Its pathway is quinol/quinone metabolism; menaquinone biosynthesis; menaquinol from 1,4-dihydroxy-2-naphthoate: step 2/2. The protein operates within cofactor biosynthesis; ubiquinone biosynthesis. Its function is as follows. Methyltransferase required for the conversion of demethylmenaquinol (DMKH2) to menaquinol (MKH2) and the conversion of 2-polyprenyl-6-methoxy-1,4-benzoquinol (DDMQH2) to 2-polyprenyl-3-methyl-6-methoxy-1,4-benzoquinol (DMQH2). The protein is Ubiquinone/menaquinone biosynthesis C-methyltransferase UbiE of Teredinibacter turnerae (strain ATCC 39867 / T7901).